Here is a 501-residue protein sequence, read N- to C-terminus: MAALLLLFLFLFASSALSQDSLIGVNIGTEVTNMPSPTQVVALLKSQNINRVRLYDADRSMLLAFAHTGVQVIISVPNDQLLGISQSNATAANWVTRNVAAYYPATNITTIAVGSEVLTSLTNAASVLVSALKYIQAALVTANLDRQIKVSTPHSSTIILDSFPPSQAFFNKTWDPVIVPLLKFLQSTGSPLLLNVYPYFDYVQSNGVIPLDYALFQPLQANKEAVDANTLLHYTNVFDAIVDAAYFAMSYLNFTNIPIVVTESGWPSKGGPSEHDATVENANTYNSNLIQHVINKTGTPKHPGTAVTTYIYELYNEDTRPGPVSEKNWGLFYTNGTPVYTLRLAGAGAILANDTTNQTFCIAKEKVDRKMLQAALDWACGPGKVDCSALMQGESCYEPDDVVAHSTYAFNAYYQKMGKASGSCDFKGVATVTTTDPSRGTCVFPGSAKSNQTLGNNTSALAPSANSTTSGCIPKYYHHPHASFGDLTLLSLLLIIALVFL.

The N-terminal stretch at 1 to 18 (MAALLLLFLFLFASSALS) is a signal peptide. Residues asparagine 88 and asparagine 107 are each glycosylated (N-linked (GlcNAc...) asparagine). Glutamate 116 acts as the Proton donor in catalysis. 2 N-linked (GlcNAc...) asparagine glycosylation sites follow: asparagine 171 and asparagine 253. The active-site Nucleophile is the glutamate 263. N-linked (GlcNAc...) asparagine glycosylation is found at asparagine 295, asparagine 353, and asparagine 357. Cysteine 361 and cysteine 424 are oxidised to a cystine. 4 N-linked (GlcNAc...) asparagine glycosylation sites follow: asparagine 451, asparagine 456, asparagine 457, and asparagine 466. Serine 470 carries GPI-anchor amidated serine lipidation. The propeptide at 471–501 (GCIPKYYHHPHASFGDLTLLSLLLIIALVFL) is removed in mature form.

This sequence belongs to the glycosyl hydrolase 17 family. Post-translationally, contains two additional disulfide bonds.

The protein resides in the cell membrane. The enzyme catalyses Hydrolysis of (1-&gt;3)-beta-D-glucosidic linkages in (1-&gt;3)-beta-D-glucans.. The sequence is that of Glucan endo-1,3-beta-glucosidase 3 from Arabidopsis thaliana (Mouse-ear cress).